Here is a 364-residue protein sequence, read N- to C-terminus: MPSATPILPRQQTAIVAEAAGKLRIQHNVTVPSPGPMVAIVKTAAVAINPVDAKMLDYSPVPGAVHGYDFAGTIVSMGPNTPAHLRIGDRVAGWVHGMNAVEPNVGAFAEYVASPADLILRIPDEMSFNDAASIGLGLFTAGLGLFHELKVPGSLSDPDGLEIAEDERFVLVAGGSTATGTRAIQLLRLAGLRPIATCSKANMDLVHRFGAEHAFDYSDPECAAEIRRYTGGTLAYALDCVAMADTTQLCYNAMGRAGGRYVTLEPFRSAIAETRPLTIEPSWLLALTVFGRKVDIDGEYSRDARPDDHKFAVELTVSVQALLDQGKFDTHPIKVMNGGWDGVKEGVDTIRTQAMSGQKLVYPV.

51-54 (VDAK) provides a ligand contact to NADP(+). A substrate-binding site is contributed by 136–143 (LGLFTAGL). NADP(+)-binding positions include 176 to 179 (STAT), 199 to 202 (SKAN), Tyr217, and 264 to 265 (LE). Residue 286 to 290 (ALTVF) coordinates substrate. 355–356 (MS) serves as a coordination point for NADP(+).

Belongs to the zinc-containing alcohol dehydrogenase family. As to quaternary structure, monomer.

It participates in secondary metabolite biosynthesis. Functionally, trans-enoyl reductase; part of the tra gene cluster that produces terrestric acid. The clavatol biosynthesis cluster cla and the terrestric acid cluster tra are both involved in the production of peniphenones and penilactones. The non-reducing PKS claF is responsible for the formation of clavatol from successive condensations of 3 malonyl-CoA units, presumably with a simple acetyl-CoA starter unit, and 2 methylation steps. The esterase claE probably collaborates with claF by catalyzing the hydrolysis of ACP-bound acyl intermediates to free the ACP from stalled intermediates. The clavatol oxidase claD then converts clavatol to hydroxyclavatol. Spontaneous dehydration of hydroxyclavatol leads to the accumulation of the highly active ortho-quinone methide. On the other hand, the PKS-NRPS hybrid traA is involved in the formation of crustosic acid, with the help of traB and traD. The polyketide synthase module (PKS) of traA is responsible for the synthesis of the polyketide backbone via the condensation of an acetyl-CoA starter unit with 3 malonyl-CoA units. The downstream nonribosomal peptide synthetase (NRPS) module then amidates the carboxyl end of the polyketide with L-malic acid. Because traA lacks a designated enoylreductase (ER) domain, the required activity is provided the enoyl reductase traG. Crustosic acid undergoes decarboxylation and isomerization to the terrestric acid, catalyzed by the 2-oxoglutarate-dependent dioxygenase traH. Both acids are further converted to the 2 gamma-butyrolactones (R)-5-methyltetronic acid and (S)-5-carboxylmethyltetronic acid, with involvement of the cytochrome P450 monooxygenase claJ. Spontaneous addition of the methide to these gamma-butyrolactones leads to peniphenone D and penilactone D, which undergo again stereospecific attacking by methide to give penilactones A and B. In Penicillium crustosum (Blue mold fungus), this protein is Trans-enoyl reductase traG.